A 310-amino-acid chain; its full sequence is Ribonuclease HIII (310 aa).

The region spanning 91-307 (YNCIGSDEAG…REKAQNLVTK (217 aa)) is the RNase H type-2 domain. Residues D97, E98, and D202 each coordinate a divalent metal cation.

Belongs to the RNase HII family. RnhC subfamily. Requires Mn(2+) as cofactor. Mg(2+) serves as cofactor.

Its subcellular location is the cytoplasm. The catalysed reaction is Endonucleolytic cleavage to 5'-phosphomonoester.. Its function is as follows. Endonuclease that specifically degrades the RNA of RNA-DNA hybrids. This Staphylococcus haemolyticus (strain JCSC1435) protein is Ribonuclease HIII.